Reading from the N-terminus, the 327-residue chain is Asnovolin J 5',6'-dehydrogenase nvfM (327 aa).

Residues 9-29 (VAIVGASGVTGGSIVNGLLAL) traverse the membrane as a helical segment. NADP(+) is bound by residues 13-19 (GASGVTG) and K47. Catalysis depends on K130, which acts as the Proton acceptor.

Belongs to the NmrA-type oxidoreductase family.

Its subcellular location is the membrane. It catalyses the reaction asnovolin K + AH2 = asnovolin A + A. It carries out the reaction chermesin D methyl ester + AH2 = asnovolin J + A. Its pathway is secondary metabolite biosynthesis; terpenoid biosynthesis. Its function is as follows. Asnovolin J 5',6'-dehydrogenase; part of the gene cluster that mediates the biosynthesis of novofumigatonin, a heavily oxygenated meroterpenoid containing a unique orthoester moiety. The first step of the pathway is the synthesis of 3,5-dimethylorsellinic acid (DMOA) by the polyketide synthase nvfA via condensation of one acetyl-CoA starter unit with 3 malonyl-CoA units and 2 methylations. DMOA is then converted to farnesyl-DMOA by the farnesyltransferase nvfB. Epoxydation by FAD-dependent monooxygenase nvfK, followed by a protonation-initiated cyclization catalyzed by the terpene cyclase nvfL leads to the production of asnavolin H. The short chain dehydrogenase nvfC then as a 3-OH dehydrogenase of asnovolin H to yield chemesin D. There are two branches to synthesize asnovolin A from chemesin D. In one branch, chemesin D undergoes Baeyer-Villiger oxidation by nvfH, methylation by nvfJ, and enoyl reduction by the nvfM D enoylreductase that reduces the double bond between C-5'and C-6', to form respectively asnovolin I, asnovolin K, and asnovolin A. In the other branch, the methylation precedes the Baeyer-Villiger oxidation and the enoyl reduction to yield asnovolin A via the asnovolin J intermediate. Asnovolin A is further converted to fumigatonoid A by the Fe(II)/2-oxoglutarate-dependent dioxygenase nvfI that catalyzes an endoperoxidation reaction. The alpha/beta hydrolase nvfD then acts as an epimerase that converts fumigatonoid A to its C-5' epimer, which then undergoes spontaneous or nvfD-catalyzed lactonization. The following step utilizes the ketoreductase nvfG to produce fumigatonoid B. The dioxygenase nvfE further converts fumigatonoid B into fumigatonoid C. Finally the Fe(II)/2-oxoglutarate-dependent dioxygenase nvfF catalyzes two rounds of oxidation to transform fumigatonoid C into the end product, novofumigatonin A. The polypeptide is Asnovolin J 5',6'-dehydrogenase nvfM (Aspergillus novofumigatus (strain IBT 16806)).